The sequence spans 105 residues: Precursor of CEP15 (105 aa).

The first 29 residues, 1–29 (MDATKIKFDVILLSFLLIISGIPSNLGLS), serve as a signal peptide directing secretion. Residues 30–90 (TSVRGTTRSE…PSPPVPDYDD (61 aa)) constitute a propeptide that is removed on maturation. Residues 68–80 (DYYDGGSSSSTTS) are compositionally biased toward low complexity. Positions 68–105 (DYYDGGSSSSTTSPSPPVPDYDDIYRRQGDVPSPGIGH) are disordered. Hydroxyproline occurs at positions 99 and 101.

It belongs to the C-terminally encoded plant signaling peptide (CEP) family. As to quaternary structure, interacts with CEP receptors (e.g. CEPR1 and CEPR2). In terms of processing, the mature small signaling peptide is generated by proteolytic processing of the longer precursor.

The protein localises to the secreted. The protein resides in the extracellular space. Its subcellular location is the apoplast. Extracellular signaling peptide that may regulate primary root growth rate and systemic nitrogen (N)-demand signaling. In Arabidopsis thaliana (Mouse-ear cress), this protein is Precursor of CEP15.